We begin with the raw amino-acid sequence, 834 residues long: Structure-specific endonuclease subunit SLX4 (834 aa).

Disordered regions lie at residues 80-105 (RVPR…KTTT), 272-307 (TVPA…QKGK), 332-372 (QNVA…GRPV), 401-421 (GYPE…SNSA), 603-649 (ESKP…AKAL), and 720-740 (ATPN…SIEP). The span at 279-295 (PTESSTTEDVQGSSSKQ) shows a compositional bias: polar residues. A compositionally biased stretch (basic residues) spans 296–305 (QRVKAKKPQK). Composition is skewed to polar residues over residues 345–366 (SNRP…TLKN) and 412–421 (DTQNSPSNSA). A compositionally biased stretch (basic and acidic residues) spans 611–630 (DDARKNGFRKENHSDVRVRP). The span at 729 to 740 (QGSSSASFSIEP) shows a compositional bias: low complexity.

Belongs to the SLX4 family. As to quaternary structure, forms a heterodimer with SLX1. Phosphorylated in response to DNA damage.

The protein resides in the nucleus. Its function is as follows. Regulatory subunit of the SLX1-SLX4 structure-specific endonuclease that resolves DNA secondary structures generated during DNA repair and recombination. Has endonuclease activity towards branched DNA substrates, introducing single-strand cuts in duplex DNA close to junctions with ss-DNA. The polypeptide is Structure-specific endonuclease subunit SLX4 (Ajellomyces capsulatus (strain NAm1 / WU24) (Darling's disease fungus)).